We begin with the raw amino-acid sequence, 193 residues long: NADPH:quinone oxidoreductase MdaB (193 aa).

FAD-binding positions include 16-23 (SNGQLNDT), 69-72 (GWWM), Tyr108, and 124-127 (TWNA).

Belongs to the oxidoreductase MdaB family. In terms of assembly, homodimer. Requires FAD as cofactor.

It is found in the cytoplasm. The enzyme catalyses a quinone + NADPH + H(+) = a quinol + NADP(+). NADPH-specific quinone reductase. This Escherichia coli O157:H7 protein is NADPH:quinone oxidoreductase MdaB.